The following is a 172-amino-acid chain: MTLHVGAEFAPREDDPEDEPRALELDLSVQYGDEITSDVRKTLPKRKLIAEWIEPALFASAQLTVRFVGENEGRTLNAGYRHKDYPTNVLTFAYDAAPDGTVIGDLVLCCPVVEKEAHDQGKPLAAHYAHLLVHGALHAQGYDHETSDEDAAEMEALEVDILAKLGFPNPYQ.

Positions 134, 138, and 144 each coordinate Zn(2+).

This sequence belongs to the endoribonuclease YbeY family. Requires Zn(2+) as cofactor.

The protein resides in the cytoplasm. Its function is as follows. Single strand-specific metallo-endoribonuclease involved in late-stage 70S ribosome quality control and in maturation of the 3' terminus of the 16S rRNA. The chain is Endoribonuclease YbeY from Burkholderia cenocepacia (strain HI2424).